The sequence spans 324 residues: Glyoxylate/hydroxypyruvate reductase B (324 aa).

Catalysis depends on residues Arg-237 and Glu-266. The active-site Proton donor is His-285.

This sequence belongs to the D-isomer specific 2-hydroxyacid dehydrogenase family. GhrB subfamily. As to quaternary structure, homodimer.

It is found in the cytoplasm. The catalysed reaction is glycolate + NADP(+) = glyoxylate + NADPH + H(+). It carries out the reaction (R)-glycerate + NAD(+) = 3-hydroxypyruvate + NADH + H(+). It catalyses the reaction (R)-glycerate + NADP(+) = 3-hydroxypyruvate + NADPH + H(+). In terms of biological role, catalyzes the NADPH-dependent reduction of glyoxylate and hydroxypyruvate into glycolate and glycerate, respectively. The sequence is that of Glyoxylate/hydroxypyruvate reductase B from Salmonella typhi.